The sequence spans 547 residues: MGNCCRSPAAAAREDVKTSHFPASTGGGKKKPHQARNGGGGGGGGGGGGWEKKRLSVLGEEGSEVNGGIEEKYALDRELGRGEFGVTYLCMDRCSRELLACKSISKRKLRTPVDVEDVRREVAIMRHLPRSASIVSLREACEDDGAVHLVMELCEGGELFDRIVARGHYTERAAAAVTRTIVEVVQLCHRHGVIHRDLKPENFLFANKKENSPLKAIDFGLSIFFKPGEKFSEIVGSPYYMAPEVLKRNYGPEIDIWSAGVILYILLCGVPPFWAETEQGVAQAILRGNIDFKREPWPNVSDNAKDLVRQMLQPDPKLRLTAKQVLEHTWLQNAKKAPNVPLGDIVKSRLKQFSRMNRFKRRALRVIADHLSAEEVEDIKDMFKVMDTDNDGIVSYEELKSGIAKFGSHLAESEVQMLIEAVDTNGRGALDYGEFLAVSLHLQRMANGEHLRRAFLFFDKDGNGYIEPEELQEALVEDGATDIMEVVKDILQEVDTDKDGKISYEEFVAMMKTGTDWRKASRHYSRGRFNSLSIRLIKDGSVKLGNE.

Residues 1 to 53 (MGNCCRSPAAAAREDVKTSHFPASTGGGKKKPHQARNGGGGGGGGGGGGWEKK) form a disordered region. A lipid anchor (N-myristoyl glycine) is attached at G2. Over residues 37-49 (NGGGGGGGGGGGG) the composition is skewed to gly residues. The 259-residue stretch at 73 to 331 (YALDRELGRG…AKQVLEHTWL (259 aa)) folds into the Protein kinase domain. Residues 79-87 (LGRGEFGVT) and K102 contribute to the ATP site. D197 acts as the Proton acceptor in catalysis. The tract at residues 337 to 367 (APNVPLGDIVKSRLKQFSRMNRFKRRALRVI) is autoinhibitory domain. 4 EF-hand domains span residues 374–409 (EEVEDIKDMFKVMDTDNDGIVSYEELKSGIAKFGSH), 410–445 (LAESEVQMLIEAVDTNGRGALDYGEFLAVSLHLQRM), 446–481 (ANGEHLRRAFLFFDKDGNGYIEPEELQEALVEDGAT), and 482–517 (DIMEVVKDILQEVDTDKDGKISYEEFVAMMKTGTDW). D387, D389, D391, E398, D423, N425, E434, D459, D461, N463, Y465, E470, D495, D497, D499, K501, and E506 together coordinate Ca(2+).

This sequence belongs to the protein kinase superfamily. Ser/Thr protein kinase family. CDPK subfamily.

The protein resides in the membrane. It catalyses the reaction L-seryl-[protein] + ATP = O-phospho-L-seryl-[protein] + ADP + H(+). The enzyme catalyses L-threonyl-[protein] + ATP = O-phospho-L-threonyl-[protein] + ADP + H(+). Activated by calcium. Autophosphorylation may play an important role in the regulation of the kinase activity. Functionally, may play a role in signal transduction pathways that involve calcium as a second messenger. This chain is Calcium-dependent protein kinase 16, found in Oryza sativa subsp. japonica (Rice).